We begin with the raw amino-acid sequence, 177 residues long: ADP-ribose 1''-phosphate phosphatase (177 aa).

In terms of domain architecture, Macro spans 1–177 (MSNITYVKGN…GDMSFTVYQL (177 aa)). Substrate is bound by residues 9–11 (GNI), 24–26 (SCN), 31–36 (WGGGIA), and 147–153 (INSGIFG).

This sequence belongs to the POA1 family.

The catalysed reaction is ADP-alpha-D-ribose 1''-phosphate + H2O = ADP-D-ribose + phosphate. Functionally, highly specific phosphatase involved in the metabolism of ADP-ribose 1''-phosphate (Appr1p) which is produced as a consequence of tRNA splicing. Removes ADP-ribose from glutamate residues in proteins bearing a single ADP-ribose moiety. Inactive towards proteins bearing poly-ADP-ribose. This chain is ADP-ribose 1''-phosphate phosphatase (POA1), found in Saccharomyces cerevisiae (strain YJM789) (Baker's yeast).